Here is a 494-residue protein sequence, read N- to C-terminus: Alpha-amylase A (494 aa).

The first 18 residues, 1–18 (MFLAKSIVCLALLAVANA), serve as a signal peptide directing secretion. Q19 bears the Pyrrolidone carboxylic acid mark. The cysteines at positions 46 and 102 are disulfide-linked. 3 residues coordinate Ca(2+): N116, R165, and D174. C153 and C167 are joined by a disulfide. R202 contacts chloride. D204 functions as the Nucleophile in the catalytic mechanism. Residue H208 participates in Ca(2+) binding. The active-site Proton donor is E241. Positions 304 and 343 each coordinate chloride. Cystine bridges form between C376–C382 and C448–C460.

Belongs to the glycosyl hydrolase 13 family. In terms of assembly, monomer. Ca(2+) serves as cofactor. It depends on chloride as a cofactor.

The enzyme catalyses Endohydrolysis of (1-&gt;4)-alpha-D-glucosidic linkages in polysaccharides containing three or more (1-&gt;4)-alpha-linked D-glucose units.. This chain is Alpha-amylase A (Amy-p), found in Drosophila melanogaster (Fruit fly).